A 230-amino-acid chain; its full sequence is Complex I assembly factor TMEM126B, mitochondrial (230 aa).

Ser34 bears the Phosphoserine mark. The next 4 helical transmembrane spans lie at 72–92, 110–130, 141–161, and 199–219; these read IYQM…SNFL, LATL…IDAL, VFRS…SLAF, and IPLV…YAVF.

Belongs to the TMEM126 family. As to quaternary structure, part of the mitochondrial complex I assembly/MCIA complex that comprises at least the core subunits TMEM126B, NDUFAF1, ECSIT and ACAD9 and complement subunits such as COA1 and TMEM186. Associates with the intermediate 370 kDa subcomplex of incompletely assembled complex I. Interacts with TMEM70.

It is found in the mitochondrion membrane. Its function is as follows. As part of the MCIA complex, involved in the assembly of the mitochondrial complex I. Participates in constructing the membrane arm of complex I. The chain is Complex I assembly factor TMEM126B, mitochondrial from Homo sapiens (Human).